A 182-amino-acid chain; its full sequence is uncharacterized protein (182 aa).

This is an uncharacterized protein from Acanthamoeba polyphaga mimivirus (APMV).